The sequence spans 340 residues: Tetrathionate reductase subunit C (340 aa).

The next 9 membrane-spanning stretches (helical) occupy residues 19–39, 57–77, 94–114, 128–148, 164–184, 195–215, 236–256, 266–286, and 306–326; these read WLPW…AALF, ALLI…ADLH, WMPW…LWFL, VTKW…IYTG, AFPV…MIVA, ILWG…MWVS, YYAV…SLAL, VLLV…LLIQ, and TDGW…LIII.

The protein belongs to the NrfD family. In terms of assembly, probably composed of three subunits: TtrA, TtrB and TtrC.

It is found in the cell inner membrane. Part of a membrane-bound tetrathionate reductase that catalyzes the reduction of tetrathionate to thiosulfate. TtrC probably anchors TtrA and TtrB to the periplasmic face of the cytoplasmic membrane. May transfer electrons from membrane quinol to TtrB. During mice infection, the ability to use tetrathionate as an electron acceptor is a growth advantage for S.typhimurium over the competing microbiota in the lumen of the inflamed gut. The protein is Tetrathionate reductase subunit C (ttrC) of Salmonella typhimurium (strain LT2 / SGSC1412 / ATCC 700720).